A 146-amino-acid chain; its full sequence is Hemoglobin subunit beta-2 (146 aa).

Residues 2-146 (EWTDFERATI…VVSSLGRQYH (145 aa)) form the Globin domain. Residues His63 and His92 each coordinate heme b.

Belongs to the globin family. As to quaternary structure, hb2 is a heterotetramer of two alpha chains and two beta-2 chains. Red blood cells.

In terms of biological role, involved in oxygen transport from gills to the various peripheral tissues. This chain is Hemoglobin subunit beta-2 (hbb2), found in Pseudaphritis urvillii (Congolli).